The following is an 892-amino-acid chain: UPF0182 protein Gura_0902 (892 aa).

7 consecutive transmembrane segments (helical) span residues 6–26 (FIII…LINF), 50–70 (VGAG…NLHF), 103–123 (LGIL…AMQW), 158–178 (MLKI…GAVY), 201–221 (LAVL…LNGC), 248–268 (ILTV…WQGA), and 271–291 (LALL…KAYP).

The protein belongs to the UPF0182 family.

The protein resides in the cell membrane. This chain is UPF0182 protein Gura_0902, found in Geotalea uraniireducens (strain Rf4) (Geobacter uraniireducens).